The chain runs to 198 residues: MRAGTLWRVLALWLLSVAAWGQEDDDHADDYTQKLFTVSISGTRVVLTCPVEAEGGDIHWERDEKSLPNTKKELDLTDFSEMEHSGYYSCYVGTKNKENEHILYLKARVCEACMEVDLTTVASIVVADVCVTLGLLLLVYYWSKNRKAKCKPVTRGAGAGGRPRGQNKERPPPVPNPDYEPIRKGQRDLYSGLNQRGI.

The signal sequence occupies residues methionine 1–glycine 21. The Extracellular portion of the chain corresponds to glutamine 22–threonine 120. Residues alanine 28–lysine 106 form the Ig-like domain. Cysteine 49 and cysteine 90 are disulfide-bonded. The helical transmembrane segment at valine 121–tyrosine 141 threads the bilayer. At tryptophan 142–isoleucine 198 the chain is on the cytoplasmic side. Residues valine 153–isoleucine 198 form a disordered region. The interval glutamine 166–arginine 183 is NUMB-binding region. One can recognise an ITAM domain in the interval glutamate 169–arginine 196. The tract at residues arginine 170–proline 177 is proline-rich sequence. Phosphotyrosine is present on residues tyrosine 179 and tyrosine 190.

In terms of assembly, the TCR-CD3 complex is composed of a CD3D/CD3E and a CD3G/CD3E heterodimers that preferentially associate with TCRalpha and TCRbeta, respectively, to form TCRalpha/CD3E/CD3G and TCRbeta/CD3G/CD3E trimers. In turn, the hexamer interacts with CD3Z homodimer to form the TCR-CD3 complex. Alternatively, TCRalpha and TCRbeta can be replaced by TCRgamma and TCRdelta. Interacts with CD6. Interacts (via Proline-rich sequence) with NCK1; the interaction is ligand dependent but independent of tyrosine kinase activation. Phosphorylated on Tyr residues after T-cell receptor triggering by LCK in association with CD4/CD8.

The protein localises to the cell membrane. Part of the TCR-CD3 complex present on T-lymphocyte cell surface that plays an essential role in adaptive immune response. When antigen presenting cells (APCs) activate T-cell receptor (TCR), TCR-mediated signals are transmitted across the cell membrane by the CD3 chains CD3D, CD3E, CD3G and CD3Z. All CD3 chains contain immunoreceptor tyrosine-based activation motifs (ITAMs) in their cytoplasmic domain. Upon TCR engagement, these motifs become phosphorylated by Src family protein tyrosine kinases LCK and FYN, resulting in the activation of downstream signaling pathways. In addition of this role of signal transduction in T-cell activation, CD3E plays an essential role in correct T-cell development. Also participates in internalization and cell surface down-regulation of TCR-CD3 complexes via endocytosis sequences present in CD3E cytosolic region. In addition to its role as a TCR coreceptor, it serves as a receptor for ITPRIPL1. Ligand recognition inhibits T-cell activation by promoting interaction with NCK1, which prevents CD3E-ZAP70 interaction and blocks the ERK-NFkB signaling cascade and calcium influx. The polypeptide is T-cell surface glycoprotein CD3 epsilon chain (CD3E) (Oryctolagus cuniculus (Rabbit)).